A 262-amino-acid polypeptide reads, in one-letter code: Hemin import ATP-binding protein HmuV (262 aa).

The 242-residue stretch at 3–244 (LQARNLTLAR…DHMRRVYGIE (242 aa)) folds into the ABC transporter domain. 35–42 (GANGAGKS) lines the ATP pocket.

The protein belongs to the ABC transporter superfamily. Heme (hemin) importer (TC 3.A.1.14.5) family. In terms of assembly, the complex is composed of two ATP-binding proteins (HmuV), two transmembrane proteins (HmuU) and a solute-binding protein (HmuT).

The protein localises to the cell inner membrane. Functionally, part of the ABC transporter complex HmuTUV involved in hemin import. Responsible for energy coupling to the transport system. This chain is Hemin import ATP-binding protein HmuV, found in Bordetella parapertussis (strain 12822 / ATCC BAA-587 / NCTC 13253).